A 262-amino-acid chain; its full sequence is Indole-3-glycerol phosphate synthase (262 aa).

This sequence belongs to the TrpC family.

It catalyses the reaction 1-(2-carboxyphenylamino)-1-deoxy-D-ribulose 5-phosphate + H(+) = (1S,2R)-1-C-(indol-3-yl)glycerol 3-phosphate + CO2 + H2O. It functions in the pathway amino-acid biosynthesis; L-tryptophan biosynthesis; L-tryptophan from chorismate: step 4/5. This is Indole-3-glycerol phosphate synthase from Clostridium acetobutylicum (strain ATCC 824 / DSM 792 / JCM 1419 / IAM 19013 / LMG 5710 / NBRC 13948 / NRRL B-527 / VKM B-1787 / 2291 / W).